The sequence spans 36 residues: Photosystem I reaction center subunit VIII (36 aa).

A helical membrane pass occupies residues 6-28 (LPSIFVPLVGLLFPAIAMVSLFF).

Belongs to the PsaI family.

The protein localises to the plastid. It localises to the chloroplast thylakoid membrane. Functionally, may help in the organization of the PsaL subunit. The sequence is that of Photosystem I reaction center subunit VIII from Nymphaea alba (White water-lily).